The chain runs to 234 residues: Orotate phosphoribosyltransferase (234 aa).

Lysine 30 serves as a coordination point for 5-phospho-alpha-D-ribose 1-diphosphate. 38–39 contributes to the orotate binding site; sequence FF. 5-phospho-alpha-D-ribose 1-diphosphate contacts are provided by residues 80 to 81, arginine 110, lysine 111, lysine 114, histidine 116, and 136 to 144; these read YK and DDVITAGTA. Positions 140 and 168 each coordinate orotate.

Belongs to the purine/pyrimidine phosphoribosyltransferase family. PyrE subfamily. Homodimer.

It catalyses the reaction orotidine 5'-phosphate + diphosphate = orotate + 5-phospho-alpha-D-ribose 1-diphosphate. Its pathway is pyrimidine metabolism; UMP biosynthesis via de novo pathway; UMP from orotate: step 1/2. Functionally, catalyzes the transfer of a ribosyl phosphate group from 5-phosphoribose 1-diphosphate to orotate, leading to the formation of orotidine monophosphate (OMP). In Metarhizium anisopliae (Entomophthora anisopliae), this protein is Orotate phosphoribosyltransferase (URA5).